The following is a 225-amino-acid chain: MANINFGFDHHAKKLYSGAIENSINSQLVPMVIETSGRGERAFDIFSRLLRERIIFLGSPIDEHVAGLIIAQLIFLESEDPERDIYIYINSPGGSVSAGLGIYDTMQYIRPDISTVCVGMAASMGAFLLASGTSGKRASLPHSRIMIHQPSGGAQGQETDILIQAREIEKIRHLLEDLLAKHTGQEVSRIREDSERDRWMSAVEAKEYGLIDQIFEKRPAPKSEE.

The active-site Nucleophile is the S123. H148 is an active-site residue.

Belongs to the peptidase S14 family. In terms of assembly, fourteen ClpP subunits assemble into 2 heptameric rings which stack back to back to give a disk-like structure with a central cavity, resembling the structure of eukaryotic proteasomes.

The protein resides in the cytoplasm. The catalysed reaction is Hydrolysis of proteins to small peptides in the presence of ATP and magnesium. alpha-casein is the usual test substrate. In the absence of ATP, only oligopeptides shorter than five residues are hydrolyzed (such as succinyl-Leu-Tyr-|-NHMec, and Leu-Tyr-Leu-|-Tyr-Trp, in which cleavage of the -Tyr-|-Leu- and -Tyr-|-Trp bonds also occurs).. Cleaves peptides in various proteins in a process that requires ATP hydrolysis. Has a chymotrypsin-like activity. Plays a major role in the degradation of misfolded proteins. This chain is ATP-dependent Clp protease proteolytic subunit, found in Chlorobaculum tepidum (strain ATCC 49652 / DSM 12025 / NBRC 103806 / TLS) (Chlorobium tepidum).